Here is a 71-residue protein sequence, read N- to C-terminus: ATP synthase subunit c (71 aa).

The next 2 helical transmembrane spans lie at 9–29 and 49–69; these read MIGY…IFAA and LLGF…AFVI.

This sequence belongs to the ATPase C chain family. In terms of assembly, F-type ATPases have 2 components, F(1) - the catalytic core - and F(0) - the membrane proton channel. F(1) has five subunits: alpha(3), beta(3), gamma(1), delta(1), epsilon(1). F(0) has three main subunits: a(1), b(2) and c(10-14). The alpha and beta chains form an alternating ring which encloses part of the gamma chain. F(1) is attached to F(0) by a central stalk formed by the gamma and epsilon chains, while a peripheral stalk is formed by the delta and b chains.

Its subcellular location is the cell membrane. F(1)F(0) ATP synthase produces ATP from ADP in the presence of a proton or sodium gradient. F-type ATPases consist of two structural domains, F(1) containing the extramembraneous catalytic core and F(0) containing the membrane proton channel, linked together by a central stalk and a peripheral stalk. During catalysis, ATP synthesis in the catalytic domain of F(1) is coupled via a rotary mechanism of the central stalk subunits to proton translocation. Functionally, key component of the F(0) channel; it plays a direct role in translocation across the membrane. A homomeric c-ring of between 10-14 subunits forms the central stalk rotor element with the F(1) delta and epsilon subunits. The sequence is that of ATP synthase subunit c from Micrococcus luteus (strain ATCC 4698 / DSM 20030 / JCM 1464 / CCM 169 / CCUG 5858 / IAM 1056 / NBRC 3333 / NCIMB 9278 / NCTC 2665 / VKM Ac-2230) (Micrococcus lysodeikticus).